The chain runs to 156 residues: MSRRHAAEKREVLPDAKFGDRVLTKFMNNLMIDGKKSAAEKIVYNAFDRVESKLKRSPLEVFHECLDNIKPSVEVRSRRVGGATYQVPVEVRPERREALAIRWLINASRARNENTMEERLAGELVDAVNSRGSAVKKREDTHKMAEANKAFSHYRW.

Belongs to the universal ribosomal protein uS7 family. As to quaternary structure, part of the 30S ribosomal subunit. Contacts proteins S9 and S11.

In terms of biological role, one of the primary rRNA binding proteins, it binds directly to 16S rRNA where it nucleates assembly of the head domain of the 30S subunit. Is located at the subunit interface close to the decoding center, probably blocks exit of the E-site tRNA. The chain is Small ribosomal subunit protein uS7 from Dinoroseobacter shibae (strain DSM 16493 / NCIMB 14021 / DFL 12).